A 179-amino-acid polypeptide reads, in one-letter code: Shikimate kinase (179 aa).

An ATP-binding site is contributed by 15–20 (GAGKTS). Thr19 provides a ligand contact to Mg(2+). The substrate site is built by Asp37, Arg61, and Gly83. Arg122 is a binding site for ATP. Residue Arg142 participates in substrate binding.

The protein belongs to the shikimate kinase family. Monomer. Mg(2+) serves as cofactor.

It localises to the cytoplasm. The enzyme catalyses shikimate + ATP = 3-phosphoshikimate + ADP + H(+). Its pathway is metabolic intermediate biosynthesis; chorismate biosynthesis; chorismate from D-erythrose 4-phosphate and phosphoenolpyruvate: step 5/7. Catalyzes the specific phosphorylation of the 3-hydroxyl group of shikimic acid using ATP as a cosubstrate. This is Shikimate kinase from Coxiella burnetii (strain Dugway 5J108-111).